A 715-amino-acid chain; its full sequence is Bromodomain-containing protein DDB_G0278469 (715 aa).

2 disordered regions span residues glutamate 18–alanine 46 and glutamine 186–glutamine 425. 5 stretches are compositionally biased toward low complexity: residues asparagine 20–asparagine 45, glutamine 186–glutamine 204, leucine 215–threonine 227, threonine 234–lysine 254, and serine 261–threonine 281. Residues lysine 307–methionine 316 are compositionally biased toward basic and acidic residues. Residues serine 322–threonine 368 adopt a coiled-coil conformation. Residues glutamate 332–leucine 359 are compositionally biased toward acidic residues. The segment covering threonine 366 to serine 389 has biased composition (polar residues). Over residues lysine 405–arginine 414 the composition is skewed to low complexity. Residues lysine 437–aspartate 470 adopt a coiled-coil conformation. Residues lysine 474–threonine 599 form the Bromo domain. The disordered stretch occupies residues leucine 653–asparagine 715. Positions leucine 662–aspartate 672 are enriched in polar residues. The span at glutamine 684–asparagine 715 shows a compositional bias: acidic residues.

The polypeptide is Bromodomain-containing protein DDB_G0278469 (Dictyostelium discoideum (Social amoeba)).